A 325-amino-acid polypeptide reads, in one-letter code: tRNA N6-adenosine threonylcarbamoyltransferase (325 aa).

Residues His-107, His-111, and Tyr-127 each contribute to the Fe cation site. Substrate contacts are provided by residues 127-131 (YVSGG), Asp-159, Gly-172, Glu-176, and Asn-257. A Fe cation-binding site is contributed by Asp-285.

Belongs to the KAE1 / TsaD family. Monomer. Component of the KEOPS complex that consists of Kae1, Bud32, Cgi121 and Pcc1; the whole complex dimerizes. It depends on Fe(2+) as a cofactor.

Its subcellular location is the cytoplasm. The catalysed reaction is L-threonylcarbamoyladenylate + adenosine(37) in tRNA = N(6)-L-threonylcarbamoyladenosine(37) in tRNA + AMP + H(+). Required for the formation of a threonylcarbamoyl group on adenosine at position 37 (t(6)A37) in tRNAs that read codons beginning with adenine. Is a component of the KEOPS complex that is probably involved in the transfer of the threonylcarbamoyl moiety of threonylcarbamoyl-AMP (TC-AMP) to the N6 group of A37. Kae1 likely plays a direct catalytic role in this reaction, but requires other protein(s) of the complex to fulfill this activity. This Thermococcus gammatolerans (strain DSM 15229 / JCM 11827 / EJ3) protein is tRNA N6-adenosine threonylcarbamoyltransferase.